The chain runs to 358 residues: MPEQGIEAQLRLQRGAFRLDAHLQLPANGISVLLGRSGSGKTTLLRAIAGLERAEGFLQVGGQLWQDATCFRPPHQRSLGYVRQASELLPHLDVRANLEFGYRRIPRARRRLGLDEVIALFGLEDLLDQRAEWLPNGPRQRVAIACALLTSPDLLLLDAPLICLDRHSRAQILPALEQLRGQLRIPLLYVTHSQDEVTRLADHLILLDKGKTFASGPPGRLLSDPRLPLNHPDEAAVVLIGQVEHHDPHYRLSTVRVPGGTLSVSLSRLPPGAETRVRIFARDVSLSLDPPHNSSILNILRVRIADLFHEQDSARVMVRLDLDSACILARITRLSADRLGLAPGLQVYAQIKSVALME.

Residues 1-234 (MPEQGIEAQL…PRLPLNHPDE (234 aa)) form the ABC transporter domain. Residue 35-42 (GRSGSGKT) participates in ATP binding. A Mop domain is found at 293–358 (NSSILNILRV…AQIKSVALME (66 aa)).

This sequence belongs to the ABC transporter superfamily. Molybdate importer (TC 3.A.1.8) family. In terms of assembly, the complex is composed of two ATP-binding proteins (ModC), two transmembrane proteins (ModB) and a solute-binding protein (ModA).

The protein resides in the cell inner membrane. It catalyses the reaction molybdate(out) + ATP + H2O = molybdate(in) + ADP + phosphate + H(+). Its function is as follows. Part of the ABC transporter complex ModABC involved in molybdenum import. Responsible for energy coupling to the transport system. The protein is Molybdenum import ATP-binding protein ModC 2 of Azotobacter vinelandii.